The chain runs to 775 residues: Glutamine--tRNA ligase (775 aa).

Alanine 2 is subject to N-acetylalanine. Position 70 is a phosphoserine (serine 70). ATP contacts are provided by residues 271-273 and 277-283; these read EPN and HIGHAKA. Position 303 (aspartate 303) interacts with L-glutamine. Lysine 309 is subject to N6-acetyllysine. Residue tyrosine 438 participates in L-glutamine binding. ATP is bound by residues threonine 457, 486 to 487, and 494 to 496; these read RL and VSK. Serine 495 is subject to Phosphoserine.

It belongs to the class-I aminoacyl-tRNA synthetase family. In terms of assembly, monomer. Part of a multisubunit complex that groups tRNA ligases for Arg (RARS1), Asp (DARS1), Gln (QARS1), Ile (IARS1), Leu (LARS1), Lys (KARS1), Met (MARS1) the bifunctional ligase for Glu and Pro (EPRS1) and the auxiliary subunits AIMP1/p43, AIMP2/p38 and EEF1E1/p18. Interacts with RARS1. Part of a complex composed of RARS1, QARS1 and AIMP1.

It localises to the cytoplasm. The protein localises to the cytosol. The catalysed reaction is tRNA(Gln) + L-glutamine + ATP = L-glutaminyl-tRNA(Gln) + AMP + diphosphate. Its function is as follows. Glutamine--tRNA ligase. Plays a critical role in brain development. The protein is Glutamine--tRNA ligase (Qars1) of Mus musculus (Mouse).